The chain runs to 1189 residues: Ras-specific guanine nucleotide-releasing factor 2 (1189 aa).

In terms of domain architecture, PH 1 spans 22–133; it reads EGTKRGFLSK…WMEAIHQASY (112 aa). Residues 158 to 193 adopt a coiled-coil conformation; sequence KIATNQLRHQLEDQDTEIERLKSEIVALNKTKERMR. Positions 205–234 constitute an IQ domain; the sequence is DIKKIKKVQSFMRGWLCRRKWKTIVQDYIC. Positions 243–429 constitute a DH domain; the sequence is KRNQIVFTMV…EELSRVMHDE (187 aa). Residues 470 to 588 enclose the PH 2 domain; it reads PSVERGKLSK…WMSDISQCVD (119 aa). Residues 635–755 form the N-terminal Ras-GEF domain; that stretch reads KVPQIRYASV…LTSSLNSRIG (121 aa). The tract at residues 713-738 is disordered; the sequence is VDGKSPRLCRKFSSPPPLAVSRTSSP. A phosphoserine mark is found at Ser725 and Ser726. A Phosphoserine; by CDK5 modification is found at Ser736. The interval 743-751 is regulates proteasomal degradation; that stretch reads KLSLTSSLN. Phosphoserine occurs at positions 745 and 749. The segment at 757–817 is disordered; the sequence is LDLTNSSSSS…TPRHLRYRQP (61 aa). The segment covering 762–776 has biased composition (low complexity); that stretch reads SSSSSSPTTTTHSPA. Ser801, Ser805, and Ser924 each carry phosphoserine. A Ras-GEF domain is found at 954–1186; sequence SAMELAEQIT…YELSLKIEPR (233 aa). The segment at 1051–1080 is responsible of the affinity for farnesylated versus geranylgeranylated Ras; sequence ALNRSAIYRLKKTWAKVSKQTKALMDKLQK.

Homooligomer and heterooligomer with RASGRF1. Interacts with Ras and RAC1. Interacts in a calcium-dependent manner with calmodulin. Interacts with EPB49 and probably CDK5R1. Interacts with the AMPA receptor through GRIA1. Interacts with microtubules. In terms of processing, phosphorylated by CDK5; down-regulates RASGRF2-mediated RAC1 activation. Ubiquitinated upon interaction with Ras. Ubiquitination leads to degradation through the 26S proteasome. Expressed in brain in the nucleus of the solitary tract. Not observed in the hippocampus (at protein level).

The protein resides in the cytoplasm. Its subcellular location is the cell membrane. It is found in the endoplasmic reticulum membrane. In terms of biological role, functions as a calcium-regulated nucleotide exchange factor activating both Ras and RAC1 through the exchange of bound GDP for GTP. Preferentially activates HRAS in vivo compared to RRAS based on their different types of prenylation. Functions in synaptic plasticity by contributing to the induction of long term potentiation. This Mus musculus (Mouse) protein is Ras-specific guanine nucleotide-releasing factor 2 (Rasgrf2).